The primary structure comprises 761 residues: MKGGGLHCRCSKCFAAPPRRRIKRRPRVLTLLSLPEDVLLYVLECLPAVDILSMREVHPHLRSLVDSHSSVWARASFQDVWPSSENLNLFERAAECGNFEACVKLGIAYLYNEGLSVSDDGRAEVNGLKASRFFSLTERLNAGADPFVWLFIRPPWSSSGSCCKAVVFDSLNEECGTVTSGEGATGALKGSIQYCLAKVLSLFEDDDKKREALGMLESSASNGCLHSAYLLWETKQKAALSDPGRYLQSFRQLRDYAARGCWDAQISLAKACGHKNPLNQEQRSAGELVNQVFQSSLPINKSSIFTTQKGMNDTMRYILIDWLVEVATMKDFSSLCLHMTVGLVDRYLKLRSVPRAKLQLVGIACMVICTRFISKEILTIREAVWLTDNTYKYEDLVRMMGEIISALEGKIRMPTVVDYKDVLSHLIPLDRNTLHLCSYISELSLLYTELSMYSPAQLAAGALLLARILHRQARPWPAQLAETTGFTLEHLTPCVVLLHKKCFHDDAPRDYRQVSLTAVKQRFQDDLYDQISKEKVMDHTHLCELLGVPCHDSESPATCPNAADFHQFLCSPSGNKTKRRREESIQEDRGSFVTTPTAELSNQEEDLLGDFLDWSLETSCSGYEGDRESEGEREGEVTAPSGVLDLSLLLTEHPQCQDSTTDDDSITLHPIPLLSKAENGTDSIEGCVEKSSGYSSVSSGGSPTSSSSPGLPFTPTPGLNHSKLTPIPFPQPCSPLLKASRRQVKRKNQAQHSEDNLSDEL.

The Nuclear localization signal 1 motif lies at 19-27 (RRRIKRRPR). The 48-residue stretch at 28 to 75 (VLTLLSLPEDVLLYVLECLPAVDILSMREVHPHLRSLVDSHSSVWARA) folds into the F-box domain. The Cyclin N-terminal domain occupies 300 to 411 (NKSSIFTTQK…EIISALEGKI (112 aa)). 2 short sequence motifs (d box) span residues 316–319 (RYIL) and 355–358 (RAKL). Disordered regions lie at residues 575–594 (NKTKRRREESIQEDRGSFVT) and 677–761 (AENG…SDEL). The segment covering 580-590 (RREESIQEDRG) has biased composition (basic and acidic residues). Residues 589–745 (RGSFVTTPTA…LLKASRRQVK (157 aa)) are PEST. Residues 691–718 (SSGYSSVSSGGSPTSSSSPGLPFTPTPG) show a composition bias toward low complexity. The span at 739 to 749 (ASRRQVKRKNQ) shows a compositional bias: basic residues.

This sequence belongs to the cyclin family. Cyclin AB subfamily. As to quaternary structure, component of the SCF(CCNF) complex.

It localises to the nucleus. Its subcellular location is the cytoplasm. The protein resides in the perinuclear region. It is found in the cytoskeleton. The protein localises to the microtubule organizing center. It localises to the centrosome. Its subcellular location is the centriole. Substrate recognition component of the SCF(CCNF) E3 ubiquitin-protein ligase complex which mediates the ubiquitination and subsequent proteasomal degradation of target proteins. The SCF(CCNF) E3 ubiquitin-protein ligase complex is an integral component of the ubiquitin proteasome system (UPS) and links proteasome degradation to the cell cycle. Mediates the substrate recognition and the proteasomal degradation of various target proteins during G2 phase involved in the regulation of cell cycle progression and in the maintenance of genome stability. The polypeptide is Cyclin-F (ccnf) (Xenopus laevis (African clawed frog)).